A 362-amino-acid polypeptide reads, in one-letter code: MKYLTVGDLEDCLLNKVDLRRQQISQAVEEVQKVVHHLTTNISNQDIRFQAVPYSDTYNENIKVLAPSQFLVTVPIKGLAGYREAREQHWRYYTLQGTRLPCPLRDPEGLQQWLEVEQFMKSLWQWHETDVNIDGDIVPAKVLLVFRKLVENAVRTCHLSGKVSLLGNRSAVWVAVETSAYQVELELVPAVEIPTTWSKKARWPRCLQRWPSQERVECIKSFGFNLLACSNYHWQLSFLRAEQVLLEQLDEDGGCRRKCFQVMRHLKEDIWCPGNRPVITSHHLQTVLFWTCEKYPHFKDWQVFSKAFLRLVRKLHKCVSQHFLKHYFVRNSNLFQCTNPTELDTVAQKLATFLKNPQIGPP.

This sequence belongs to the mab-21 family.

The polypeptide is Protein mab-21-like 3 (MAB21L3) (Homo sapiens (Human)).